The sequence spans 126 residues: Fatty acid-binding protein, liver (126 aa).

Cholate is bound by residues 54–56, 99–101, and Arg-121; these read TPN and HEQ.

This sequence belongs to the calycin superfamily. Fatty-acid binding protein (FABP) family.

The protein resides in the cytoplasm. Functionally, FABPs are thought to play a role in the intracellular transport of long-chain fatty acids and their acyl-CoA esters. The sequence is that of Fatty acid-binding protein, liver from Anolis pulchellus (Common grass anole).